The chain runs to 625 residues: tRNA uridine 5-carboxymethylaminomethyl modification enzyme MnmG (625 aa).

FAD-binding positions include 9 to 14 (GGGHAG), V121, and S176. Position 270 to 284 (270 to 284 (GPRYCPSIEDKIYRF)) interacts with NAD(+). Q367 lines the FAD pocket.

This sequence belongs to the MnmG family. As to quaternary structure, homodimer. Heterotetramer of two MnmE and two MnmG subunits. It depends on FAD as a cofactor.

The protein resides in the cytoplasm. Its function is as follows. NAD-binding protein involved in the addition of a carboxymethylaminomethyl (cmnm) group at the wobble position (U34) of certain tRNAs, forming tRNA-cmnm(5)s(2)U34. The polypeptide is tRNA uridine 5-carboxymethylaminomethyl modification enzyme MnmG (Nitratiruptor sp. (strain SB155-2)).